Here is a 330-residue protein sequence, read N- to C-terminus: Neurogenic differentiation factor 4 (330 aa).

The segment at 1 to 79 (MTKTYTKAKE…RGPKKKKMTK (79 aa)) is disordered. A compositionally biased stretch (basic and acidic residues) spans 25–35 (LSSKDELKAEN). Residues 52–64 (DSIEEEEEEEDDG) are compositionally biased toward acidic residues. Residues 67 to 79 (PKRRGPKKKKMTK) are compositionally biased toward basic residues. Residues 73–79 (KKKKMTK) carry the Nuclear localization signal motif. The region spanning 87–139 (ARRVKANARERTRMHGLNDALDNLRRVMPCYSKTQKLSKIETLRLARNYIWAL) is the bHLH domain. A leucine-zipper region spans residues 162–183 (LSQPTSNLVAGCLQLGPQTLFL).

In terms of assembly, efficient DNA binding requires dimerization with another bHLH protein. In terms of processing, serine or threonine phosphorylation within the basic region may regulate neurogenic activity. As to expression, expressed in both the developing central nervous system and peripheral nervous system.

The protein localises to the nucleus. Its function is as follows. Probably acts as a transcriptional activator. Mediates neuronal differentiation. Required for the regulation of amacrine cell fate specification in the retina. The protein is Neurogenic differentiation factor 4 (NEUROD4) of Gallus gallus (Chicken).